The primary structure comprises 1222 residues: ATP-dependent helicase/nuclease subunit A (1222 aa).

Positions 39–495 constitute a UvrD-like helicase ATP-binding domain; that stretch reads QKRTAQQIEA…ILLKENFRSQ (457 aa). 60–67 lines the ATP pocket; that stretch reads ASAGSGKT. In terms of domain architecture, UvrD-like helicase C-terminal spans 524–810; the sequence is QLIAGSHAQT…NLMTIHKSKG (287 aa).

It belongs to the helicase family. AddA subfamily. Heterodimer of AddA and AddB/RexB. Requires Mg(2+) as cofactor.

The enzyme catalyses Couples ATP hydrolysis with the unwinding of duplex DNA by translocating in the 3'-5' direction.. It catalyses the reaction ATP + H2O = ADP + phosphate + H(+). Functionally, the heterodimer acts as both an ATP-dependent DNA helicase and an ATP-dependent, dual-direction single-stranded exonuclease. Recognizes the chi site generating a DNA molecule suitable for the initiation of homologous recombination. The AddA nuclease domain is required for chi fragment generation; this subunit has the helicase and 3' -&gt; 5' nuclease activities. The chain is ATP-dependent helicase/nuclease subunit A from Streptococcus pyogenes serotype M12 (strain MGAS9429).